Reading from the N-terminus, the 253-residue chain is Sulfate transporter CysZ (253 aa).

A run of 4 helical transmembrane segments spans residues 31–51, 75–95, 151–171, and 222–242; these read FVIL…WWLF, LLWP…FSTI, IVLL…PVLW, and IPLL…AMWV.

This sequence belongs to the CysZ family.

The protein resides in the cell inner membrane. Functionally, high affinity, high specificity proton-dependent sulfate transporter, which mediates sulfate uptake. Provides the sulfur source for the cysteine synthesis pathway. The protein is Sulfate transporter CysZ of Escherichia coli (strain 55989 / EAEC).